Reading from the N-terminus, the 28-residue chain is Glutathione S-transferase 5 (28 aa).

The GST N-terminal domain occupies 1-28 (PNYKLTYFNLRGRAEISRYLFAYAGIKY). Tyr-7 serves as a coordination point for glutathione.

It belongs to the GST superfamily. Sigma family. In terms of assembly, homodimer.

The protein resides in the cytoplasm. It catalyses the reaction RX + glutathione = an S-substituted glutathione + a halide anion + H(+). Functionally, conjugation of reduced glutathione to a wide number of exogenous and endogenous hydrophobic electrophiles. The polypeptide is Glutathione S-transferase 5 (Gallus gallus (Chicken)).